The primary structure comprises 499 residues: Bifunctional purine biosynthesis protein PurH (499 aa).

Residues Met1–Thr144 form the MGS-like domain.

It belongs to the PurH family.

It carries out the reaction (6R)-10-formyltetrahydrofolate + 5-amino-1-(5-phospho-beta-D-ribosyl)imidazole-4-carboxamide = 5-formamido-1-(5-phospho-D-ribosyl)imidazole-4-carboxamide + (6S)-5,6,7,8-tetrahydrofolate. The enzyme catalyses IMP + H2O = 5-formamido-1-(5-phospho-D-ribosyl)imidazole-4-carboxamide. The protein operates within purine metabolism; IMP biosynthesis via de novo pathway; 5-formamido-1-(5-phospho-D-ribosyl)imidazole-4-carboxamide from 5-amino-1-(5-phospho-D-ribosyl)imidazole-4-carboxamide (10-formyl THF route): step 1/1. It participates in purine metabolism; IMP biosynthesis via de novo pathway; IMP from 5-formamido-1-(5-phospho-D-ribosyl)imidazole-4-carboxamide: step 1/1. This Clostridium acetobutylicum (strain ATCC 824 / DSM 792 / JCM 1419 / IAM 19013 / LMG 5710 / NBRC 13948 / NRRL B-527 / VKM B-1787 / 2291 / W) protein is Bifunctional purine biosynthesis protein PurH.